We begin with the raw amino-acid sequence, 419 residues long: Thymidine phosphorylase (419 aa).

It belongs to the thymidine/pyrimidine-nucleoside phosphorylase family. As to quaternary structure, homodimer.

It catalyses the reaction thymidine + phosphate = 2-deoxy-alpha-D-ribose 1-phosphate + thymine. Functionally, the enzymes which catalyze the reversible phosphorolysis of pyrimidine nucleosides are involved in the degradation of these compounds and in their utilization as carbon and energy sources, or in the rescue of pyrimidine bases for nucleotide synthesis. The protein is Thymidine phosphorylase (deoA) of Mycoplasmoides pirum (Mycoplasma pirum).